Consider the following 499-residue polypeptide: Uridine-cytidine kinase A (499 aa).

The interval 1–44 is disordered; that stretch reads MSDNSTTKVTTNDSPSLTTTTSTTTAPTTTTTTTTTPTHNHDTT. Positions 10–38 are enriched in low complexity; sequence TTNDSPSLTTTTSTTTAPTTTTTTTTTPT. An ATP-binding site is contributed by 78-85; sequence GGSASGKT.

The protein belongs to the uridine kinase family.

It catalyses the reaction uridine + ATP = UMP + ADP + H(+). The catalysed reaction is cytidine + ATP = CMP + ADP + H(+). Its pathway is pyrimidine metabolism; CTP biosynthesis via salvage pathway; CTP from cytidine: step 1/3. It functions in the pathway pyrimidine metabolism; UMP biosynthesis via salvage pathway; UMP from uridine: step 1/1. Functionally, catalyzes the conversion of uridine into uridine monophosphate and cytidine into cytidine monophosphate in the pyrimidine salvage pathway. The sequence is that of Uridine-cytidine kinase A (udkA) from Dictyostelium discoideum (Social amoeba).